Reading from the N-terminus, the 393-residue chain is 8-amino-7-oxononanoate synthase (393 aa).

Arg-18 serves as a coordination point for substrate. Position 105–106 (105–106 (GY)) interacts with pyridoxal 5'-phosphate. His-130 is a substrate binding site. Residues Ser-178, His-206, and Thr-234 each contribute to the pyridoxal 5'-phosphate site. Lys-237 is modified (N6-(pyridoxal phosphate)lysine). Thr-353 provides a ligand contact to substrate.

This sequence belongs to the class-II pyridoxal-phosphate-dependent aminotransferase family. BioF subfamily. In terms of assembly, homodimer. Pyridoxal 5'-phosphate serves as cofactor.

It carries out the reaction 6-carboxyhexanoyl-[ACP] + L-alanine + H(+) = (8S)-8-amino-7-oxononanoate + holo-[ACP] + CO2. The protein operates within cofactor biosynthesis; biotin biosynthesis. In terms of biological role, catalyzes the decarboxylative condensation of pimeloyl-[acyl-carrier protein] and L-alanine to produce 8-amino-7-oxononanoate (AON), [acyl-carrier protein], and carbon dioxide. The polypeptide is 8-amino-7-oxononanoate synthase (Geotalea daltonii (strain DSM 22248 / JCM 15807 / FRC-32) (Geobacter daltonii)).